Reading from the N-terminus, the 245-residue chain is Lytic switch protein BZLF1 (245 aa).

A transactivation region spans residues 1 to 167 (MMDPNSTSED…RTRKPQQPES (167 aa)). T14 and T159 each carry phosphothreonine; by host. The Bipartite nuclear localization signal signature appears at 157-194 (RRTRKPQQPESLEECDSELEIKRYKNRVASRKCRAKFK). Phosphoserine; by host occurs at positions 167, 173, and 186. In terms of domain architecture, bZIP spans 170–228 (ECDSELEIKRYKNRVASRKCRAKFKQLLQHYREVAAAKSSENDRLRLLLKQMCPSLDVD). A basic motif region spans residues 178 to 195 (KRYKNRVASRKCRAKFKQ). Positions 196–228 (LLQHYREVAAAKSSENDRLRLLLKQMCPSLDVD) are leucine-zipper. The interval 229 to 245 (SIIPRTPDVLHEDLLNF) is accessory activation domain.

This sequence belongs to the bZIP family. Homodimer. Interacts (via b-ZIP domain) with the DNA polymerase processivity factor BMRF1 (via N-terminus); this interaction may inhibit BZLF1-induced transcription of the BMRF1 promoter. Interacts with human UBN1, CRTC2 and RACK1. Interacts (via N-terminus) with human PAX5 (via N-terminus); this interaction inhibits BZLF1-mediated lytic viral reactivation. Interacts (via leucine-zipper domain) with host CEBPA; this interaction induces G1 host cell cycle arrest. Interacts (via C-terminus) with host TP53BP1 (via C-terminus); this interaction is involved in the activation of the viral lytic cycle. Interacts with host chromatin-remodeling ATPase INO80; this interaction participates to the activation of early lytic viral genes by BZLF1. Interacts with host regulator of chromatin SMARCA5/hSNF2H; this interaction participates to the activation of early lytic viral genes by BZLF1. Interacts with host PLSCR1/Phospholipid scramblase 1; this interaction negatively regulates the transcriptional regulatory activity of BZLF1 by preventing the formation of the BZLF1-CBP complex.

Its subcellular location is the host nucleus. Its function is as follows. Transcription factor that acts as a molecular switch to induce the transition from the latent to the lytic or productive phase of the virus cycle. Mediates the switch from the latent to the lytic cycle of infection in cells containing a highly methylated viral genome. Probably binds to silenced chromatin and recruits host chromatin-remodeling enzymes. Regulates this switch by binding to 2 types of ZEBRA response elements (ZREs): the CpG-free AP-1 like elements (latency) and the methylated CpG-containing elements (lytic replication). Activates preferentially the methylated forms of the viral lytic R (BRLF1) and Na (BRRF1) gene promoters, the latters being the first genes activated during Z-mediated reactivation in latently infected cells. BZLF1 and BRLF1 act together to trigger lytic replication. Also binds the lytic origin of replication, oriLyt. Induces G1 cell cycle arrest by stabilizing the host CCAAT/enhancer binding protein CEBPA. This function is important because the lytic cycle preferentially takes place in host cells arrested in G1. The sequence is that of Lytic switch protein BZLF1 from Epstein-Barr virus (strain B95-8) (HHV-4).